The primary structure comprises 252 residues: Triosephosphate isomerase (252 aa).

Asn-10–Lys-12 provides a ligand contact to substrate. The Electrophile role is filled by His-96. The active-site Proton acceptor is Glu-168. Residues Gly-174, Ser-214, and Gly-235–Gly-236 contribute to the substrate site.

This sequence belongs to the triosephosphate isomerase family. In terms of assembly, homodimer.

The protein localises to the cytoplasm. The catalysed reaction is D-glyceraldehyde 3-phosphate = dihydroxyacetone phosphate. It participates in carbohydrate biosynthesis; gluconeogenesis. It functions in the pathway carbohydrate degradation; glycolysis; D-glyceraldehyde 3-phosphate from glycerone phosphate: step 1/1. Involved in the gluconeogenesis. Catalyzes stereospecifically the conversion of dihydroxyacetone phosphate (DHAP) to D-glyceraldehyde-3-phosphate (G3P). The sequence is that of Triosephosphate isomerase from Streptococcus thermophilus (strain CNRZ 1066).